Reading from the N-terminus, the 101-residue chain is MRFASLFVVYCTFMFLDISHVKCEVEPVPYCKVITWYDVKCGADGNKTCVDHLIKGHIYDVPVCDCSELTTSGILCTCQHRFPCKEPPPLHRISIRKQIRG.

An N-terminal signal peptide occupies residues 1 to 23 (MRFASLFVVYCTFMFLDISHVKC). Cystine bridges form between Cys-31-Cys-84, Cys-41-Cys-66, Cys-49-Cys-76, and Cys-64-Cys-78.

The protein belongs to the DEFL family.

The protein resides in the secreted. This is Putative defensin-like protein 253 (SCRL15) from Arabidopsis thaliana (Mouse-ear cress).